Consider the following 256-residue polypeptide: uncharacterized protein (256 aa).

2 helical membrane passes run 155–175 and 203–223; these read ITGM…GLWL and ITTT…YLLI.

It localises to the cell membrane. This is an uncharacterized protein from Mycobacterium bovis (strain ATCC BAA-935 / AF2122/97).